A 311-amino-acid polypeptide reads, in one-letter code: Salutaridine reductase (311 aa).

NADP(+)-binding positions include 21–24, R44, 70–71, and N98; these read NKGI and DV. Residues Y129 and S180 each contribute to the substrate site. NADP(+) contacts are provided by residues Y236, K240, and 267-272; that span reads VKTEMN. Y236 (proton acceptor) is an active-site residue. An intrachain disulfide couples C263 to C305.

Belongs to the short-chain dehydrogenases/reductases (SDR) family.

It catalyses the reaction (7S)-salutaridinol + NADP(+) = salutaridine + NADPH + H(+). It participates in alkaloid biosynthesis; morphine biosynthesis. With respect to regulation, strong substrate inhibition. Was thought to be due to mutually exclusive productive and non-productive modes of substrate binding in the active site. Alternatively, SALR may undergo significant conformational changes during catalytic turnover. Functionally, short-chain dehydrogenases/reductases involved in biosynthesis of morphinan-type benzylisoquinoline and opiate alkaloids natural products. Catalyzes specifically the stereospecific conversion of salutaridine to salutaridinol. The chain is Salutaridine reductase from Papaver somniferum (Opium poppy).